The following is a 707-amino-acid chain: Alpha-hemolysin translocation ATP-binding protein HlyB (707 aa).

The Peptidase C39 domain maps to 3 to 125 (SCHKIDYGLY…ALYQGHIILI (123 aa)). His83 is an active-site residue. The ABC transmembrane type-1 domain occupies 154-436 (FIETLVVSVF…LAQIWQDFQQ (283 aa)). 5 helical membrane passes run 158-178 (LVVS…FQVV), 191-211 (LNVI…LSGL), 269-289 (ALTS…MWYY), 295-315 (LVIL…SPIL), and 388-408 (VMII…LSIG). The 236-residue stretch at 468–703 (ITFRNIRFRY…PESLYSYLYQ (236 aa)) folds into the ABC transporter domain. 502–509 (GRSGSGKS) provides a ligand contact to ATP.

This sequence belongs to the ABC transporter superfamily. Protein-1 exporter (TC 3.A.1.109) family. Homodimer.

Its subcellular location is the cell inner membrane. Its function is as follows. Part of the ABC transporter complex HlyBD involved in hemolysin export. Transmembrane domains (TMD) form a pore in the inner membrane and the ATP-binding domain (NBD) is responsible for energy generation. The protein is Alpha-hemolysin translocation ATP-binding protein HlyB (hlyB) of Escherichia coli.